Consider the following 349-residue polypeptide: S-adenosylmethionine:tRNA ribosyltransferase-isomerase (349 aa).

It belongs to the QueA family. As to quaternary structure, monomer.

The protein resides in the cytoplasm. It catalyses the reaction 7-aminomethyl-7-carbaguanosine(34) in tRNA + S-adenosyl-L-methionine = epoxyqueuosine(34) in tRNA + adenine + L-methionine + 2 H(+). It functions in the pathway tRNA modification; tRNA-queuosine biosynthesis. In terms of biological role, transfers and isomerizes the ribose moiety from AdoMet to the 7-aminomethyl group of 7-deazaguanine (preQ1-tRNA) to give epoxyqueuosine (oQ-tRNA). The polypeptide is S-adenosylmethionine:tRNA ribosyltransferase-isomerase (Pseudomonas fluorescens (strain SBW25)).